A 150-amino-acid chain; its full sequence is Protein-export protein SecB (150 aa).

The protein belongs to the SecB family. As to quaternary structure, homotetramer, a dimer of dimers. One homotetramer interacts with 1 SecA dimer.

It localises to the cytoplasm. Functionally, one of the proteins required for the normal export of preproteins out of the cell cytoplasm. It is a molecular chaperone that binds to a subset of precursor proteins, maintaining them in a translocation-competent state. It also specifically binds to its receptor SecA. The chain is Protein-export protein SecB from Acidovorax ebreus (strain TPSY) (Diaphorobacter sp. (strain TPSY)).